Reading from the N-terminus, the 196-residue chain is Imidazoleglycerol-phosphate dehydratase (196 aa).

This sequence belongs to the imidazoleglycerol-phosphate dehydratase family.

The protein resides in the cytoplasm. It catalyses the reaction D-erythro-1-(imidazol-4-yl)glycerol 3-phosphate = 3-(imidazol-4-yl)-2-oxopropyl phosphate + H2O. Its pathway is amino-acid biosynthesis; L-histidine biosynthesis; L-histidine from 5-phospho-alpha-D-ribose 1-diphosphate: step 6/9. This chain is Imidazoleglycerol-phosphate dehydratase, found in Chlorobium chlorochromatii (strain CaD3).